The chain runs to 307 residues: Protoheme IX farnesyltransferase (307 aa).

The next 8 membrane-spanning stretches (helical) occupy residues 32 to 52 (MGIVNSNTLTVFTGFWLALHF), 65 to 85 (FFTIVGSALIMAGVCCLNNYI), 108 to 128 (PGFALAFGLVILLLGFVFLLL), 131 to 151 (PMAVLISFIGAFTYVVLYTLW), 158 to 178 (LNTVVGSISGAVPPLIGWAAI), 186 to 206 (IAWMLFLIMFIWQIPHFLALA), 251 to 271 (LGITFMVIATLLNIGWIALGL), and 287 to 307 (FVYSLNYLTILFVSMIVVTFF).

Belongs to the UbiA prenyltransferase family. Protoheme IX farnesyltransferase subfamily. Interacts with CtaA.

It is found in the cell membrane. It catalyses the reaction heme b + (2E,6E)-farnesyl diphosphate + H2O = Fe(II)-heme o + diphosphate. It participates in porphyrin-containing compound metabolism; heme O biosynthesis; heme O from protoheme: step 1/1. In terms of biological role, converts heme B (protoheme IX) to heme O by substitution of the vinyl group on carbon 2 of heme B porphyrin ring with a hydroxyethyl farnesyl side group. The chain is Protoheme IX farnesyltransferase from Bacillus mycoides (strain KBAB4) (Bacillus weihenstephanensis).